A 337-amino-acid polypeptide reads, in one-letter code: UDP-3-O-acylglucosamine N-acyltransferase (337 aa).

The active-site Proton acceptor is His-238.

It belongs to the transferase hexapeptide repeat family. LpxD subfamily. Homotrimer.

The enzyme catalyses a UDP-3-O-[(3R)-3-hydroxyacyl]-alpha-D-glucosamine + a (3R)-hydroxyacyl-[ACP] = a UDP-2-N,3-O-bis[(3R)-3-hydroxyacyl]-alpha-D-glucosamine + holo-[ACP] + H(+). It participates in bacterial outer membrane biogenesis; LPS lipid A biosynthesis. Catalyzes the N-acylation of UDP-3-O-acylglucosamine using 3-hydroxyacyl-ACP as the acyl donor. Is involved in the biosynthesis of lipid A, a phosphorylated glycolipid that anchors the lipopolysaccharide to the outer membrane of the cell. This is UDP-3-O-acylglucosamine N-acyltransferase from Xanthomonas campestris pv. campestris (strain 8004).